Reading from the N-terminus, the 454-residue chain is Pup--protein ligase (454 aa).

Glu-9 provides a ligand contact to Mg(2+). Arg-53 contacts ATP. Residue Tyr-55 coordinates Mg(2+). The active-site Proton acceptor is the Asp-57. Residue Glu-63 participates in Mg(2+) binding. Residues Thr-66 and Trp-420 each coordinate ATP.

This sequence belongs to the Pup ligase/Pup deamidase family. Pup-conjugating enzyme subfamily.

It carries out the reaction ATP + [prokaryotic ubiquitin-like protein]-L-glutamate + [protein]-L-lysine = ADP + phosphate + N(6)-([prokaryotic ubiquitin-like protein]-gamma-L-glutamyl)-[protein]-L-lysine.. The protein operates within protein degradation; proteasomal Pup-dependent pathway. It participates in protein modification; protein pupylation. Catalyzes the covalent attachment of the prokaryotic ubiquitin-like protein modifier Pup to the proteasomal substrate proteins, thereby targeting them for proteasomal degradation. This tagging system is termed pupylation. The ligation reaction involves the side-chain carboxylate of the C-terminal glutamate of Pup and the side-chain amino group of a substrate lysine. This is Pup--protein ligase from Paenarthrobacter aurescens (strain TC1).